We begin with the raw amino-acid sequence, 79 residues long: Small ribosomal subunit protein bS20 (79 aa).

Belongs to the bacterial ribosomal protein bS20 family.

In terms of biological role, binds directly to 16S ribosomal RNA. The chain is Small ribosomal subunit protein bS20 from Karelsulcia muelleri (strain GWSS) (Sulcia muelleri).